The following is a 93-amino-acid chain: Alpha-conotoxin RVIIIA (93 aa).

Positions 1–20 (MMSKMGAMFVLLLLFTLASS) are cleaved as a signal peptide. The propeptide occupies 21-46 (QQEGDVQARKTHPKREFQRILLRSGR). Residues glutamate 63 and glutamate 68 each carry the 4-carboxyglutamate modification.

Contains 5 disulfide bonds. As to expression, expressed by the venom duct.

It localises to the secreted. In terms of biological role, alpha-conotoxins act on postsynaptic membranes, they bind to the nicotinic acetylcholine receptors (nAChR) and thus inhibit them. This toxin provokes a nearly complete and slowly reversible inhibition of both the human adult (alpha-1-beta-1-epsilon-delta (CHRNA1-CHRNB1-CHRND-CHRNE)) and human fetal (alpha-1-beta-1-gamma-delta (CHRNA1-CHRNB1-CHRNG-CHRND)) neuromuscular nAChRs. It also reversibly blocks the neuromuscular alpha-7/CHRNA7 nAChR, the alpha-3-beta-2 (CHRNA3-CHRNB2) nAChR, the chimeric alpha-6 or -3/beta-3 or -2 (CHRNA6/CHRNA3-CHRNB2-CHRNB3) nAChR and with a low potency the alpha-4-beta-2 (CHRNA4-CHRNB2) nAChR. In addition, the toxin also inhibits the alpha-9-alpha-10 (CHRNA9-CHRNA10) nAChR with a high potency (IC(50)=187 nM). The polypeptide is Alpha-conotoxin RVIIIA (Conus radiatus (Rayed cone)).